A 332-amino-acid chain; its full sequence is 2,3-diketo-L-gulonate reductase (332 aa).

H44 functions as the Proton donor in the catalytic mechanism. NAD(+)-binding positions include I168–S174, W224–K225, and G304–E306.

Belongs to the LDH2/MDH2 oxidoreductase family. DlgD subfamily. As to quaternary structure, homodimer.

The protein localises to the cytoplasm. It catalyses the reaction 3-dehydro-L-gulonate + NAD(+) = 2,3-dioxo-L-gulonate + NADH + H(+). The catalysed reaction is 3-dehydro-L-gulonate + NADP(+) = 2,3-dioxo-L-gulonate + NADPH + H(+). Catalyzes the reduction of 2,3-diketo-L-gulonate in the presence of NADH, to form 3-keto-L-gulonate. In Salmonella paratyphi B (strain ATCC BAA-1250 / SPB7), this protein is 2,3-diketo-L-gulonate reductase.